Consider the following 65-residue polypeptide: Large ribosomal subunit protein uL29 (65 aa).

The protein belongs to the universal ribosomal protein uL29 family.

This Dehalococcoides mccartyi (strain ATCC BAA-2100 / JCM 16839 / KCTC 5957 / BAV1) protein is Large ribosomal subunit protein uL29.